Consider the following 94-residue polypeptide: Protein RnfH (94 aa).

Belongs to the UPF0125 (RnfH) family.

This Sodalis glossinidius (strain morsitans) protein is Protein RnfH.